We begin with the raw amino-acid sequence, 111 residues long: UPF0375 protein ule-4 (111 aa).

Residues 1–18 (MNSRLVLLLAVSVALVSA) form the signal peptide. N-linked (GlcNAc...) asparagine glycans are attached at residues Asn-23 and Asn-58.

It belongs to the UPF0375 family.

The protein localises to the secreted. This chain is UPF0375 protein ule-4, found in Caenorhabditis elegans.